A 165-amino-acid polypeptide reads, in one-letter code: (2E)-enoyl-[ACP] glycyltransferase (165 aa).

The protein belongs to the FcoT family.

It carries out the reaction a (3R)-3-[(carboxymethyl)amino]fatty acid + holo-[ACP] + H(+) = a (2E)-enoyl-[ACP] + glycine + H2O. The enzyme catalyses (3R)-3-[(carboxymethyl)amino]butanoate + holo-[ACP] + H(+) = (2E)-butenoyl-[ACP] + glycine + H2O. In terms of biological role, involved in the biosynthesis of a unique class of isonitrile lipopeptides (INLPs). Catalyzes a Michael addition of glycine to the beta-position of an alpha,beta-unsaturated fatty acyl-[ACP], producing a (3R)-3-[(carboxymethyl)amino]fatty acid. Acts on the (2E)-butenoyl moiety loaded on the acyl-carrier protein ScoB, forming the product (3R)-3-[(carboxymethyl)amino]butanoate released from ScoB. The sequence is that of (2E)-enoyl-[ACP] glycyltransferase from Streptomyces coeruleorubidus.